The primary structure comprises 360 residues: 45 kDa calcium-binding protein (360 aa).

Residues 1–29 form the signal peptide; the sequence is MVSKQAFLFSLGSLYLSLLFIFLLMDVYA. Asparagine 33 carries N-linked (GlcNAc...) asparagine glycosylation. 5 consecutive EF-hand domains span residues 96–131, 135–170, 231–266, 276–311, and 312–347; these read RNRR…KTEE, EAVN…SKGF, MLKF…TVEN, WVRD…MNEY, and NALN…FTGS. Ca(2+) contacts are provided by aspartate 109, asparagine 111, aspartate 113, glutamine 115, glutamate 120, aspartate 148, aspartate 150, aspartate 152, histidine 154, glutamate 159, aspartate 244, aspartate 246, aspartate 248, lysine 250, glutamate 255, aspartate 289, asparagine 291, aspartate 293, glutamate 300, aspartate 325, asparagine 327, aspartate 329, and glutamate 336.

It belongs to the CREC family.

Its subcellular location is the golgi apparatus lumen. May regulate calcium-dependent activities in the endoplasmic reticulum lumen or post-ER compartment. The chain is 45 kDa calcium-binding protein (sdf4) from Xenopus laevis (African clawed frog).